Consider the following 358-residue polypeptide: Phospho-N-acetylmuramoyl-pentapeptide-transferase (358 aa).

Transmembrane regions (helical) follow at residues 24-44, 73-93, 95-115, 134-154, 169-189, 197-217, 233-253, 261-281, 286-306, and 335-355; these read FRSI…GPWV, TMGG…WADL, NVFI…GFVD, MFWQ…LPGF, ELGI…SNAV, GLAI…CYIA, GAGE…GFLW, VFMG…LAVL, ILLV…IFQV, and KIIV…ISTL.

It belongs to the glycosyltransferase 4 family. MraY subfamily. Mg(2+) is required as a cofactor.

It is found in the cell inner membrane. It catalyses the reaction UDP-N-acetyl-alpha-D-muramoyl-L-alanyl-gamma-D-glutamyl-meso-2,6-diaminopimeloyl-D-alanyl-D-alanine + di-trans,octa-cis-undecaprenyl phosphate = di-trans,octa-cis-undecaprenyl diphospho-N-acetyl-alpha-D-muramoyl-L-alanyl-D-glutamyl-meso-2,6-diaminopimeloyl-D-alanyl-D-alanine + UMP. It functions in the pathway cell wall biogenesis; peptidoglycan biosynthesis. Catalyzes the initial step of the lipid cycle reactions in the biosynthesis of the cell wall peptidoglycan: transfers peptidoglycan precursor phospho-MurNAc-pentapeptide from UDP-MurNAc-pentapeptide onto the lipid carrier undecaprenyl phosphate, yielding undecaprenyl-pyrophosphoryl-MurNAc-pentapeptide, known as lipid I. In Geobacter sp. (strain M21), this protein is Phospho-N-acetylmuramoyl-pentapeptide-transferase.